The primary structure comprises 330 residues: MAASVSHPALSSFHKISCNITGISGLISFSRRISVSSVLPTSAVAAKRDAAGKGVRGQMKPRRQAGEPRTERMAVDQDWTAVYPTAASFKPSAVPLPVRMGYPVNRGVPPAKHGNLELIKIPNFLHLTPATIKKHCEALKPFLTEWPSALDSDEKCTEHFPIQVQSKDFVSSGLSLRNPDARIVTLKVKHSSLNLDDHARKKMIKLAEKRYCKETDTLTITTDSCPLRQQNYDYAMYLLTVLYHESWKSEAWEQEKTRADMEEYEWQDSPSQRNILETLKSIRGTEETHELLDQPEVGEYRNSVTQMKNHGETEENLLRYKEAVKKLLQL.

A disordered region spans residues 50–73 (AAGKGVRGQMKPRRQAGEPRTERM). Basic and acidic residues predominate over residues 64 to 73 (QAGEPRTERM).

The protein belongs to the mitochondrion-specific ribosomal protein mS35 family. As to quaternary structure, component of the mitochondrial ribosome small subunit (28S) which comprises a 12S rRNA and about 30 distinct proteins.

The protein resides in the mitochondrion. This is Small ribosomal subunit protein mS35 (mrps35) from Danio rerio (Zebrafish).